A 371-amino-acid polypeptide reads, in one-letter code: Glycosyltransferase 8 domain-containing protein 1 (371 aa).

The Cytoplasmic segment spans residues 1 to 7; it reads MSFRKVN. The helical; Signal-anchor for type II membrane protein transmembrane segment at 8 to 28 threads the bilayer; it reads IVILVLAVALFLLVLHHNFLG. At 29 to 371 the chain is on the lumenal side; it reads LSSLLRNEVS…RRHVEISNTK (343 aa). 2 N-linked (GlcNAc...) asparagine glycosylation sites follow: N103 and N257.

The protein belongs to the glycosyltransferase 8 family.

The protein localises to the membrane. The polypeptide is Glycosyltransferase 8 domain-containing protein 1 (GLT8D1) (Bos taurus (Bovine)).